The primary structure comprises 409 residues: Elongation factor Tu, chloroplastic (409 aa).

A tr-type G domain is found at 10-214 (KPHVNIGTIG…AVDAYIPTPE (205 aa)). Positions 19–26 (GHVDHGKT) are G1. 19 to 26 (GHVDHGKT) is a binding site for GTP. Threonine 26 contacts Mg(2+). The segment at 60–64 (GITIN) is G2. Residues 81–84 (DCPG) form a G3 region. GTP contacts are provided by residues 81-85 (DCPGH) and 136-139 (NKQD). Positions 136-139 (NKQD) are G4. The segment at 174-176 (SAL) is G5.

The protein belongs to the TRAFAC class translation factor GTPase superfamily. Classic translation factor GTPase family. EF-Tu/EF-1A subfamily.

It localises to the plastid. Its subcellular location is the chloroplast. It carries out the reaction GTP + H2O = GDP + phosphate + H(+). Its function is as follows. GTP hydrolase that promotes the GTP-dependent binding of aminoacyl-tRNA to the A-site of ribosomes during protein biosynthesis. The protein is Elongation factor Tu, chloroplastic (tufA) of Thalassiosira pseudonana (Marine diatom).